A 360-amino-acid chain; its full sequence is Putative agmatine deiminase (360 aa).

Cys-353 acts as the Amidino-cysteine intermediate in catalysis.

Belongs to the agmatine deiminase family.

The enzyme catalyses agmatine + H2O = N-carbamoylputrescine + NH4(+). This Vibrio parahaemolyticus serotype O3:K6 (strain RIMD 2210633) protein is Putative agmatine deiminase.